The following is a 20-amino-acid chain: Hemocyanin subunit 6 (20 aa).

This sequence belongs to the tyrosinase family. Hemocyanin subfamily. As to expression, hemolymph.

The protein localises to the secreted. Its subcellular location is the extracellular space. Its function is as follows. Hemocyanins are copper-containing oxygen carriers occurring freely dissolved in the hemolymph of many mollusks and arthropods. The polypeptide is Hemocyanin subunit 6 (Homarus americanus (American lobster)).